The primary structure comprises 449 residues: Heterogeneous nuclear ribonucleoprotein H2 (449 aa).

Methionine 1 carries the post-translational modification N-acetylmethionine. Methionine 2 carries the post-translational modification N-acetylmethionine; in Heterogeneous nuclear ribonucleoprotein H2, N-terminally processed. The region spanning 11–90 is the RRM 1 domain; sequence FVVKVRGLPW…RYVEVFKSNS (80 aa). At serine 23 the chain carries Phosphoserine. Lysine 35 is covalently cross-linked (Glycyl lysine isopeptide (Lys-Gly) (interchain with G-Cter in SUMO2)). A phosphoserine mark is found at serine 54 and serine 63. Lysine 87 is covalently cross-linked (Glycyl lysine isopeptide (Lys-Gly) (interchain with G-Cter in SUMO2)). Serine 90 carries the post-translational modification Phosphoserine. Residue lysine 98 forms a Glycyl lysine isopeptide (Lys-Gly) (interchain with G-Cter in SUMO2) linkage. The RRM 2 domain maps to 111–188; it reads GFVRLRGLPF…RYIEIFKSSR (78 aa). Arginine 233 is modified (dimethylated arginine; alternate). Arginine 233 is subject to Omega-N-methylarginine; alternate. Residues 234-249 form a 1-1 repeat; the sequence is GAYGGGYGGYDDYGGY. The 2 X 16 AA Gly-rich approximate repeats stretch occupies residues 234-433; the sequence is GAYGGGYGGY…YGGQSSMSGY (200 aa). Phosphotyrosine is present on tyrosine 246. The RRM 3 domain occupies 289–364; that stretch reads HCVHMRGLPY…RYVELFLNST (76 aa). Serine 310 carries the phosphoserine modification. 3 repeat units span residues 354–372, 374–392, and 418–433. The tract at residues 354–392 is 2 X 19 AA perfect repeats; that stretch reads HRYVELFLNSTAGTSGGAYDHSYVELFLNSTAGASGGAY.

Component of a ribonucleoprotein complex containing mRNAs and RNA-binding proteins including DDX5, HNRNPH2 and SRSF1 as well as splicing regulator ARVCF. Interacts with TXNL4/DIM1.

It is found in the nucleus. Its subcellular location is the nucleoplasm. In terms of biological role, this protein is a component of the heterogeneous nuclear ribonucleoprotein (hnRNP) complexes which provide the substrate for the processing events that pre-mRNAs undergo before becoming functional, translatable mRNAs in the cytoplasm. Binds poly(RG). The chain is Heterogeneous nuclear ribonucleoprotein H2 (Hnrnph2) from Rattus norvegicus (Rat).